The chain runs to 907 residues: MDYSLTVLLPKTDFPMKANLPQREPHWIEVWEKEKVYSTLLEKRKNCPQFILHDGPPFANGKAHMGSGLNKILKDIVLKSRNMLGFQCPYIPGWDCHGLPIEHKVMSEYPALAADPLSIRNKCKEYARYWIEIQKEQFRRLGILGSWDNPYITMDPGYEAAELRLFAELVEKKWVYRGLRPVFWSVGCRTALAEAEIEYQKKEDIAIYVEFPVGEEELKKAGLPQGTSFLAWTTTPWTLPANLALAVSPDLSYELRQVGGKKFIVAGKLAESIPGFSHSVVLLSFPSGQNLEGLKYNHPLLPREGVVYTADFVSGETGSGIVHIAPGHGMEDYQLGMVHGLEVYSPVDDQGRFTKQCGIEKIVGLSVFEANSILCAMLKEKGLLWAKYPYVHDYPFCWRSKTPIIFRSVPQWFIAIEAFKSLALKEIERVNWIPSRGENRIKGAVESRKDWCISRQRYWGVPIPAFYKKSGEAILDPSIIRRFADKVEEEGTDLWFRLESKELCQLLGLAPSEDLVKGLDTLDVWIDSGSSHYSVLKPRGEDPADLYLEGSDQHRGWFQSSLLLSVASKGKAPYKSVLTHGFVVDLDGKKLSKSSGARDLSEQIQTYGADLLRLWVASEEYAEDVPFSKEIFSRLSDSYRLIRNSLRILLGNLHDFNPQEQSLPDDRLREIDRYFELCVNKLVKKTKAFYENYEFSQVYQALTRFCSVELSSFYIDILKDRLYCDGQNWLSRRSAQTVLYRTFECLVKLLAPILPFTTEEAWRASGKTSSIHLELFPEEREIKEEEKLLKRWEKILQLRDLANRELEKARKQKMIGKNLEAKLILFTDDFEAEDTALLTEVFLVSQLEIIRSSKTEILVEKALGKKCPRCWKFSLFAQSNSDPQYPHVCPRCLKVLKGLPESFLVSD.

A 'HIGH' region motif is present at residues 57–67; it reads PFANGKAHMGS. Glu-549 provides a ligand contact to L-isoleucyl-5'-AMP. A 'KMSKS' region motif is present at residues 590-594; that stretch reads KLSKS. Lys-593 lines the ATP pocket. Residues Cys-867, Cys-870, Cys-889, and Cys-892 each coordinate Zn(2+).

The protein belongs to the class-I aminoacyl-tRNA synthetase family. IleS type 1 subfamily. As to quaternary structure, monomer. Zn(2+) serves as cofactor.

The protein resides in the cytoplasm. The enzyme catalyses tRNA(Ile) + L-isoleucine + ATP = L-isoleucyl-tRNA(Ile) + AMP + diphosphate. Functionally, catalyzes the attachment of isoleucine to tRNA(Ile). As IleRS can inadvertently accommodate and process structurally similar amino acids such as valine, to avoid such errors it has two additional distinct tRNA(Ile)-dependent editing activities. One activity is designated as 'pretransfer' editing and involves the hydrolysis of activated Val-AMP. The other activity is designated 'posttransfer' editing and involves deacylation of mischarged Val-tRNA(Ile). In Methylacidiphilum infernorum (isolate V4) (Methylokorus infernorum (strain V4)), this protein is Isoleucine--tRNA ligase.